The primary structure comprises 241 residues: Probable transcriptional regulatory protein stu0195 (241 aa).

Belongs to the TACO1 family. YeeN subfamily.

The protein resides in the cytoplasm. The protein is Probable transcriptional regulatory protein stu0195 of Streptococcus thermophilus (strain ATCC BAA-250 / LMG 18311).